Here is a 180-residue protein sequence, read N- to C-terminus: MSRDYNCTTDDQLAWGIPSISHAWGLWALLGVVTVLLLISLAALLSQWTRGRRRNQEGQGPLSGRSAEEVPLYGNLHYLQTGRLSQEPRSEEQDPPSSGGLARGAEEAMCYTSLQLRPAQGRIPSSGNPIKYCEVVLDSEPKPQAPGPEPELYASVCAQTRRGRASFPDQAYANSQPAPS.

The Extracellular portion of the chain corresponds to 1-24 (MSRDYNCTTDDQLAWGIPSISHAW). Asn-6 carries N-linked (GlcNAc...) asparagine glycosylation. A helical; Signal-anchor for type III membrane protein transmembrane segment spans residues 25 to 45 (GLWALLGVVTVLLLISLAALL). Residues 46–180 (SQWTRGRRRN…AYANSQPAPS (135 aa)) are Cytoplasmic-facing. Phosphoserine is present on residues Ser-63 and Ser-66. Tyr-73 is modified (phosphotyrosine). An interaction with GRB2 region spans residues 73–76 (YGNL). The disordered stretch occupies residues 81-103 (TGRLSQEPRSEEQDPPSSGGLAR). Ser-85 and Ser-90 each carry phosphoserine. Residues Tyr-111, Tyr-132, and Tyr-153 each carry the phosphotyrosine modification. The segment at 130–135 (IKYCEV) is interaction with PTPN11. Positions 153–156 (YASV) are interaction with CSK. Residue Ser-166 is modified to Phosphoserine. The residue at position 172 (Tyr-172) is a Phosphotyrosine. The interaction with GRB2 stretch occupies residues 172–175 (YANS).

As to quaternary structure, homodimer; disulfide-linked. When phosphorylated, interacts with PTPN11/SHP2, GRB2 and CSK. Phosphorylated on tyrosines upon TCR activation; which leads to the recruitment of PTPN11, GRB2 and CSK. Expressed in thymus and spleen, with highest levels in immature thymocytes (at protein level).

Its subcellular location is the cell membrane. Negatively regulates T-cell antigen receptor (TCR)-mediated signaling. Involved in positive selection of T-cells. This is Signaling threshold-regulating transmembrane adapter 1 (Sit1) from Mus musculus (Mouse).